The primary structure comprises 227 residues: Ubiquitin domain-containing protein 1 (227 aa).

Residues methionine 1–lysine 35 form a disordered region. The span at glycine 24 to lysine 35 shows a compositional bias: basic and acidic residues. A Ubiquitin-like domain is found at phenylalanine 149 to proline 224.

As to quaternary structure, interacts with UBTD1.

Its function is as follows. May be involved in the regulation of cellular senescence through a positive feedback loop with TP53. Is a TP53 downstream target gene that increases the stability of TP53 protein by promoting the ubiquitination and degradation of MDM2. The chain is Ubiquitin domain-containing protein 1 (UBTD1) from Homo sapiens (Human).